We begin with the raw amino-acid sequence, 432 residues long: Glutamate-1-semialdehyde 2,1-aminomutase (432 aa).

Lys-265 carries the N6-(pyridoxal phosphate)lysine modification.

This sequence belongs to the class-III pyridoxal-phosphate-dependent aminotransferase family. HemL subfamily. Homodimer. Pyridoxal 5'-phosphate serves as cofactor.

Its subcellular location is the cytoplasm. The enzyme catalyses (S)-4-amino-5-oxopentanoate = 5-aminolevulinate. Its pathway is porphyrin-containing compound metabolism; protoporphyrin-IX biosynthesis; 5-aminolevulinate from L-glutamyl-tRNA(Glu): step 2/2. In Histophilus somni (strain 129Pt) (Haemophilus somnus), this protein is Glutamate-1-semialdehyde 2,1-aminomutase.